A 497-amino-acid polypeptide reads, in one-letter code: Putative aldehyde dehydrogenase AldA (497 aa).

213–219 (GKGSESG) provides a ligand contact to NAD(+). Active-site residues include Glu257 and Cys291.

This sequence belongs to the aldehyde dehydrogenase family.

The catalysed reaction is an aldehyde + NAD(+) + H2O = a carboxylate + NADH + 2 H(+). In Staphylococcus epidermidis (strain ATCC 35984 / DSM 28319 / BCRC 17069 / CCUG 31568 / BM 3577 / RP62A), this protein is Putative aldehyde dehydrogenase AldA (aldA).